The following is a 207-amino-acid chain: Protein N-terminal glutamine amidohydrolase (207 aa).

Residues cysteine 30, histidine 83, and aspartate 99 contribute to the active site.

The protein belongs to the NTAQ1 family. Monomer.

The protein localises to the cytoplasm. Its subcellular location is the cytosol. It localises to the nucleus. It catalyses the reaction N-terminal L-glutaminyl-[protein] + H2O = N-terminal L-glutamyl-[protein] + NH4(+). Mediates the side-chain deamidation of N-terminal glutamine residues to glutamate, an important step in N-end rule pathway of protein degradation. Conversion of the resulting N-terminal glutamine to glutamate renders the protein susceptible to arginylation, polyubiquitination and degradation as specified by the N-end rule. Does not act on substrates with internal or C-terminal glutamine and does not act on non-glutamine residues in any position. Does not deaminate acetylated N-terminal glutamine. With the exception of proline, all tested second-position residues on substrate peptides do not greatly influence the activity. In contrast, a proline at position 2, virtually abolishes deamidation of N-terminal glutamine. The sequence is that of Protein N-terminal glutamine amidohydrolase (Ntaq1) from Rattus norvegicus (Rat).